We begin with the raw amino-acid sequence, 356 residues long: Cyclin-D2-2 (356 aa).

The span at 325–343 shows a compositional bias: polar residues; the sequence is LGSSQSNSNNKDYNSQDSA. The disordered stretch occupies residues 325–356; it reads LGSSQSNSNNKDYNSQDSAPASKRRRLNTTPI. Residues 346 to 356 show a composition bias toward basic residues; that stretch reads SKRRRLNTTPI.

Belongs to the cyclin family. Cyclin D subfamily.

The sequence is that of Cyclin-D2-2 (CYCD2-2) from Oryza sativa subsp. japonica (Rice).